A 523-amino-acid polypeptide reads, in one-letter code: METMKSKANCAQNPNCNIMIFHPTKEEFNDFDKYIAYMESQGAHRAGLAKIIPPKEWKARETYDNISEILIATPLQQVASGRAGVFTQYHKKKKAMTVGEYRHLANSKKYQTPPHQNFEDLERKYWKNRIYNSPIYGADISGSLFDENTKQWNLGHLGTIQDLLEKECGVVIEGVNTPYLYFGMWKTTFAWHTEDMDLYSINYLHLGEPKTWYVVPPEHGQRLERLARELFPGSSRGCGAFLRHKVALISPTVLKENGIPFNRITQEAGEFMVTFPYGYHAGFNHGFNCAEAINFATPRWIDYGKMASQCSCGEARVTFSMDAFVRILQPERYDLWKRGQDRAVVDHMEPRVPASQELSTQKEVQLPRRAALGLRQLPSHWARHSPWPMAARSGTRCHTLVCSSLPRRSAVSGTATQPRAAAVHSSKKPSSTPSSTPGPSAQIIHPSNGRRGRGRPPQKLRAQELTLQTPAKRPLLAGTTCTASGPEPEPLPEDGALMDKPVPLSPGLQHPVKASGCSWAPVP.

The JmjN domain maps to 18–60 (IMIFHPTKEEFNDFDKYIAYMESQGAHRAGLAKIIPPKEWKAR). PolyADP-ribosyl glutamic acid is present on residues Glu26 and Glu27. Tyr136 contacts 2-oxoglutarate. Residues 146–312 (DENTKQWNLG…YGKMASQCSC (167 aa)) enclose the JmjC domain. Positions 192 and 194 each coordinate Fe cation. 2 residues coordinate 2-oxoglutarate: Asn202 and Lys210. The Zn(2+) site is built by Cys238 and His244. Lys245 provides a ligand contact to 2-oxoglutarate. His280 is a binding site for Fe cation. Zn(2+)-binding residues include Cys310 and Cys312. Residues 407–523 (RRSAVSGTAT…ASGCSWAPVP (117 aa)) form a disordered region. The span at 428–440 (KPSSTPSSTPGPS) shows a compositional bias: low complexity. Residues 448-458 (NGRRGRGRPPQ) show a composition bias toward basic residues.

Belongs to the JHDM3 histone demethylase family. Requires Fe(2+) as cofactor. Post-translationally, ubiquitinated via 'Lys-63'-linked ubiquitin chains. Deubiquitinated by USP14 with the help of TRIM14 leading to stabilization.

Its subcellular location is the nucleus. It carries out the reaction N(6),N(6),N(6)-trimethyl-L-lysyl(9)-[histone H3] + 2 2-oxoglutarate + 2 O2 = N(6)-methyl-L-lysyl(9)-[histone H3] + 2 formaldehyde + 2 succinate + 2 CO2. Functionally, histone demethylase that specifically demethylates 'Lys-9' of histone H3, thereby playing a central role in histone code. Does not demethylate histone H3 'Lys-4', H3 'Lys-27', H3 'Lys-36' nor H4 'Lys-20'. Demethylates both di- and trimethylated H3 'Lys-9' residue, while it has no activity on monomethylated residues. Demethylation of Lys residue generates formaldehyde and succinate. The polypeptide is Lysine-specific demethylase 4D (KDM4D) (Homo sapiens (Human)).